A 372-amino-acid polypeptide reads, in one-letter code: M protein, serotype 2.2 (372 aa).

Residues 1 to 41 form the signal peptide; sequence MARQQTKKNYSLRKLKTGTASVAVALTVLGAGFANQTEVRA. C repeat units lie at residues 124–158, 166–200, and 215–249; these read AKTT…EAKH, KKLT…EAKY, and QKLE…TSEL. Basic and acidic residues-rich tracts occupy residues 125–169, 226–246, and 260–274; these read KTTK…KKLT, TSRK…KKVT, and EESK…AELQ. Disordered stretches follow at residues 125 to 191 and 211 to 274; these read KTTK…ASRA and EAKH…AELQ. D repeat units follow at residues 275 to 280, 281 to 286, 289 to 294, and 296 to 301; these read AKLDAQ, GKALKE, AKQTEE, and AKLRAE. Basic and acidic residues predominate over residues 295-304; sequence LAKLRAEKAA. Residues 295–344 are disordered; that stretch reads LAKLRAEKAAGSKTPATKPANKERSGRAAQTATRPSQNKGMRSQLPSTGE. Polar residues predominate over residues 322–341; sequence AAQTATRPSQNKGMRSQLPS. Positions 339-343 match the LPXTG sorting signal motif; the sequence is LPSTG. T342 is modified (pentaglycyl murein peptidoglycan amidated threonine). Positions 343–372 are cleaved as a propeptide — removed by sortase; sequence GEAANPFFTAAAATVMVSAGMLALKRKEEN.

The protein belongs to the M protein family.

It is found in the secreted. The protein localises to the cell wall. This protein is one of the different antigenic serotypes of protein M. Protein M is closely associated with virulence of the bacterium and can render the organism resistant to phagocytosis. This chain is M protein, serotype 2.2 (emmL2.2), found in Streptococcus pyogenes.